The chain runs to 881 residues: Phosphoenolpyruvate carboxylase (881 aa).

Catalysis depends on residues H138 and K545.

It belongs to the PEPCase type 1 family. Requires Mg(2+) as cofactor.

It carries out the reaction oxaloacetate + phosphate = phosphoenolpyruvate + hydrogencarbonate. In terms of biological role, forms oxaloacetate, a four-carbon dicarboxylic acid source for the tricarboxylic acid cycle. This Shewanella oneidensis (strain ATCC 700550 / JCM 31522 / CIP 106686 / LMG 19005 / NCIMB 14063 / MR-1) protein is Phosphoenolpyruvate carboxylase.